The sequence spans 136 residues: MNSQIKNKAVYWGTGRRKTSVARVRLIPGNGLIKINGRAGDDYLNFNPLHLNSIKAPLQTLGLENSYDMYVNVFGGGLTGQADAIKQGAARALCELSPDNRKPLKTEGHLSRDPRAKERRKYGLKKARKAPQFSKR.

The tract at residues 97–136 (SPDNRKPLKTEGHLSRDPRAKERRKYGLKKARKAPQFSKR) is disordered. Basic and acidic residues predominate over residues 98-116 (PDNRKPLKTEGHLSRDPRA). The segment covering 117–136 (KERRKYGLKKARKAPQFSKR) has biased composition (basic residues).

It belongs to the universal ribosomal protein uS9 family.

The sequence is that of Small ribosomal subunit protein uS9 from Prochlorococcus marinus (strain MIT 9301).